Reading from the N-terminus, the 508-residue chain is Metalloprotease TIKI1 (508 aa).

The N-terminal stretch at 1–23 is a signal peptide; that stretch reads MVIIWNIFLPAFLLVLAKASLRS. The Extracellular portion of the chain corresponds to 24-485; that stretch reads SRDSANCKLN…KYIKAAQSVS (462 aa). Residues N219, N228, N277, and N335 are each glycosylated (N-linked (GlcNAc...) asparagine). Residues 486-506 traverse the membrane as a helical segment; that stretch reads FSLSIPSAFLLLAWCFQQVAV. The Cytoplasmic portion of the chain corresponds to 507–508; sequence LQ.

It belongs to the TIKI family. Mn(2+) serves as cofactor. Co(2+) is required as a cofactor. In terms of tissue distribution, zygotically expressed in the Spemann-Mangold organizer, in particular in the head Spemann-Mangold organizer region responsible for anterior patterning.

Its subcellular location is the cell membrane. In terms of biological role, metalloprotease that acts as a negative regulator of the Wnt signaling pathway: expressed in the Spemann-Mangold organizer and is required for anterior-neural patterning in head formation in embryos. Acts by mediating the cleavage of the N-terminal residues of a subset of Wnt proteins. Following cleavage, Wnt proteins become oxidized and form large disulfide-bond oligomers, leading to their inactivation. Able to cleave wnt8. The chain is Metalloprotease TIKI1 (trabd2a) from Xenopus tropicalis (Western clawed frog).